Consider the following 493-residue polypeptide: Cobyric acid synthase (493 aa).

The GATase cobBQ-type domain maps to 246 to 440 (PIDIAVIKMP…IHGVFDGIVF (195 aa)). C326 acts as the Nucleophile in catalysis. The active site involves H432.

It belongs to the CobB/CobQ family. CobQ subfamily.

Its pathway is cofactor biosynthesis; adenosylcobalamin biosynthesis. In terms of biological role, catalyzes amidations at positions B, D, E, and G on adenosylcobyrinic A,C-diamide. NH(2) groups are provided by glutamine, and one molecule of ATP is hydrogenolyzed for each amidation. This chain is Cobyric acid synthase, found in Clostridium botulinum (strain 657 / Type Ba4).